Here is a 291-residue protein sequence, read N- to C-terminus: Trimeric intracellular cation channel type B (291 aa).

Over 1–15 (MESPWNELTLAFSRT) the chain is Lumenal. The chain crosses the membrane as a helical span at residues 16-33 (SMFPFFDIAHYLVSVMAL). Over 34-47 (KHQPGAAALAWKNP) the chain is Cytoplasmic. A helical membrane pass occupies residues 48-69 (LSSWFTAMLHCFGGGILSCVLL). Over 70–80 (AEPPLRFLANN) the chain is Lumenal. Residues 81 to 100 (TNILLASSIWYIAFFCPCDL) traverse the membrane as a helical segment. Over 101-103 (ISQ) the chain is Cytoplasmic. A helical membrane pass occupies residues 104 to 122 (AYSFLPVQLLAAGMKEVTR). A 1,2-diacyl-sn-glycero-3-phospho-(1D-myo-inositol-4,5-bisphosphate)-binding residues include K118 and R122. The Lumenal segment spans residues 123–138 (TWKIVGGVTHANSYYK). The helical transmembrane segment at 139–156 (NGWIVMIAVGWARGAGGS) threads the bilayer. Over 157–179 (IITNFEQLVKGCWKPEAEEWLKM) the chain is Cytoplasmic. Residues 180–196 (SYPAKVTLLGSVIFTFQ) traverse the membrane as a helical segment. Residues 197-207 (QTKYLAISKHN) lie on the Lumenal side of the membrane. A helical membrane pass occupies residues 208 to 225 (LMFLFTVFLVATKITMMI). At 226 to 291 (TKTALVPFAC…VKKKHSKKTE (66 aa)) the chain is on the cytoplasmic side. A disordered region spans residues 257–291 (KSETKSSFNGTGSSTSKPVANASDKVKKKHSKKTE). A compositionally biased stretch (polar residues) spans 261–274 (KSSFNGTGSSTSKP). S262 carries the phosphoserine modification. Residues 282 to 291 (VKKKHSKKTE) are compositionally biased toward basic residues.

This sequence belongs to the TMEM38 family. As to quaternary structure, homotrimer; conformation seems to be controled by binding to diacylglycerol (DAG).

It is found in the endoplasmic reticulum membrane. The enzyme catalyses K(+)(in) = K(+)(out). Its activity is regulated as follows. Channel activity is activated by increased cytosolic Ca(2+) levels and blocked by luminal high Ca(2+) levels. Intracellular monovalent cation channel required for maintenance of rapid intracellular calcium release. Acts as a potassium counter-ion channel that functions in synchronization with calcium release from intracellular stores. Activated by increased cytosolic Ca(2+) levels. In Bos taurus (Bovine), this protein is Trimeric intracellular cation channel type B (TMEM38B).